Reading from the N-terminus, the 115-residue chain is MPKANNAVASRARRKRILKKAKGFWGSRGNILTVVKHAVDKAEQYAYRDRRAKKRTFRSLWIMRINAAARLNGTTYSRLVDAMSKKSVEIDRKVLAEIAVKDPAAFTQIVKSVID.

It belongs to the bacterial ribosomal protein bL20 family.

Its function is as follows. Binds directly to 23S ribosomal RNA and is necessary for the in vitro assembly process of the 50S ribosomal subunit. It is not involved in the protein synthesizing functions of that subunit. In Chlorobium limicola (strain DSM 245 / NBRC 103803 / 6330), this protein is Large ribosomal subunit protein bL20.